The primary structure comprises 217 residues: Large ribosomal subunit protein eL14 (217 aa).

An N6-acetyllysine modification is found at lysine 79. Lysine 85 carries the post-translational modification N6-acetyllysine; alternate. Lysine 85 carries the N6-succinyllysine; alternate modification. Lysine 124 participates in a covalent cross-link: Glycyl lysine isopeptide (Lys-Gly) (interchain with G-Cter in SUMO2). Serine 139 is modified (phosphoserine). Residues 162-217 (KVPAKKATGPGKKAAGQKAPAQKAAGQKAAPPAKGQKGQKTPAQKAPAPKAAGKKA) form a disordered region. One copy of the 1-1; approximate repeat lies at 173–177 (KKAAG). A 4 X 5 AA tandem repeats of Q-K-A-[APS]-X region spans residues 173–192 (KKAAGQKAPAQKAAGQKAAP). A run of 5 repeats spans residues 178 to 182 (QKAPA), 183 to 187 (QKAAG), 188 to 192 (QKAAP), 195 to 197 (KGQ), and 198 to 200 (KGQ). The segment at 195–200 (KGQKGQ) is 2 X 3 AA tandem repeats of K-G-Q. Lysine 206 carries the N6-succinyllysine modification.

The protein belongs to the eukaryotic ribosomal protein eL14 family. In terms of assembly, component of the large ribosomal subunit.

The protein localises to the cytoplasm. Component of the large ribosomal subunit. The ribosome is a large ribonucleoprotein complex responsible for the synthesis of proteins in the cell. This is Large ribosomal subunit protein eL14 (Rpl14) from Mus musculus (Mouse).